The chain runs to 522 residues: Major facilitator-type transporter sorT (522 aa).

The disordered stretch occupies residues 1 to 21 (MSHTEPKAPVNTGEVENGHLY). 12 helical membrane-spanning segments follow: residues 52 to 72 (WFIA…SSAY), 89 to 109 (VFIV…AVWA), 121 to 141 (QILW…SAGS), 143 to 163 (NVAT…SPLV), 183 to 203 (TIYC…GGFV), 211 to 231 (WVQG…IVFI), 280 to 300 (WIFL…AIIY), 324 to 344 (IGGL…VYAI), 366 to 386 (LPPA…FAWT), 395 to 415 (VSII…LPIM), 427 to 447 (ASVL…FPLF), and 457 to 477 (IHWA…FPLI).

It belongs to the major facilitator superfamily. Sugar transporter (TC 2.A.1.1) family.

The protein localises to the membrane. Major facilitator-type transporter; part of the gene cluster that mediates the biosynthesis of sorbicillinoids, a diverse group of yellow secondary metabolites that restrict growth of competing pathogenic fungi but not of bacteria. This Penicillium rubens (strain ATCC 28089 / DSM 1075 / NRRL 1951 / Wisconsin 54-1255) (Penicillium chrysogenum) protein is Major facilitator-type transporter sorT.